The following is a 504-amino-acid chain: UDP-N-acetylmuramoylalanine--D-glutamate ligase (504 aa).

Position 129-135 (129-135) interacts with ATP; sequence GTNGKTT.

It belongs to the MurCDEF family.

It is found in the cytoplasm. It carries out the reaction UDP-N-acetyl-alpha-D-muramoyl-L-alanine + D-glutamate + ATP = UDP-N-acetyl-alpha-D-muramoyl-L-alanyl-D-glutamate + ADP + phosphate + H(+). Its pathway is cell wall biogenesis; peptidoglycan biosynthesis. Cell wall formation. Catalyzes the addition of glutamate to the nucleotide precursor UDP-N-acetylmuramoyl-L-alanine (UMA). This Burkholderia pseudomallei (strain 668) protein is UDP-N-acetylmuramoylalanine--D-glutamate ligase.